A 190-amino-acid chain; its full sequence is Adenylate kinase (190 aa).

Residue 10–15 (AAGKGT) coordinates ATP. Residues 30–59 (STGDMLRAAIASGSELGQRVSGIMERGELV) are NMP. AMP is bound by residues Thr-31, Arg-36, 57–59 (ELV), 85–88 (GFPR), and Gln-92. Residues 126-136 (GRFAESGRADD) form an LID region. Arg-127 contributes to the ATP binding site. Positions 133 and 144 each coordinate AMP. Gly-172 is a binding site for ATP.

This sequence belongs to the adenylate kinase family. In terms of assembly, monomer.

The protein resides in the cytoplasm. The enzyme catalyses AMP + ATP = 2 ADP. The protein operates within purine metabolism; AMP biosynthesis via salvage pathway; AMP from ADP: step 1/1. Catalyzes the reversible transfer of the terminal phosphate group between ATP and AMP. Plays an important role in cellular energy homeostasis and in adenine nucleotide metabolism. The chain is Adenylate kinase from Phenylobacterium zucineum (strain HLK1).